Consider the following 345-residue polypeptide: Trans-3-hydroxy-L-proline dehydratase (345 aa).

Ser90 serves as the catalytic Proton acceptor. Substrate-binding positions include 91 to 92 (GS), Asp252, and 257 to 258 (GT).

It belongs to the proline racemase family.

It carries out the reaction trans-3-hydroxy-L-proline = 1-pyrroline-2-carboxylate + H2O. Catalyzes the dehydration of trans-3-hydroxy-L-proline (t3LHyp) to Delta(1)-pyrroline-2-carboxylate (Pyr2C). May be involved in a degradation pathway that converts t3LHyp to L-proline, which would allow S.novella to grow on t3LHyp as a sole carbon source. In Ancylobacter novellus (strain ATCC 8093 / DSM 506 / JCM 20403 / CCM 1077 / IAM 12100 / NBRC 12443 / NCIMB 10456) (Starkeya novella), this protein is Trans-3-hydroxy-L-proline dehydratase.